A 162-amino-acid chain; its full sequence is Phospholipase A and acyltransferase 2 (162 aa).

Residues 1–133 (MALARPRPRL…VSRSDQVTGA (133 aa)) lie on the Cytoplasmic side of the membrane. The LRAT domain occupies 13–129 (LIEISRFGYA…LRYGVSRSDQ (117 aa)). Catalysis depends on residues histidine 23 and histidine 35. The active-site Acyl-thioester intermediate is cysteine 113. Residues 134–154 (VTTVGVAAGLLAAASLVGILL) form a helical membrane-spanning segment. Topologically, residues 155–162 (ARSKRERQ) are lumenal.

This sequence belongs to the H-rev107 family. In terms of tissue distribution, expressed in liver, kidney, small intestine testis and colon. Undetectable in testis, placenta, salivary gland and fetal brain.

The protein localises to the cytoplasm. It is found in the membrane. The catalysed reaction is a 1,2-diacyl-sn-glycero-3-phosphocholine + H2O = a 1-acyl-sn-glycero-3-phosphocholine + a fatty acid + H(+). The enzyme catalyses a 1,2-diacyl-sn-glycero-3-phosphocholine + H2O = a 2-acyl-sn-glycero-3-phosphocholine + a fatty acid + H(+). It carries out the reaction a 1,2-diacyl-sn-glycero-3-phosphoethanolamine + a 1,2-diacyl-sn-glycero-3-phosphocholine = an N-acyl-1,2-diacyl-sn-glycero-3-phosphoethanolamine + a 1-acyl-sn-glycero-3-phosphocholine + H(+). It catalyses the reaction a 1,2-diacyl-sn-glycero-3-phosphoethanolamine + a 1,2-diacyl-sn-glycero-3-phosphocholine = an N-acyl-1,2-diacyl-sn-glycero-3-phosphoethanolamine + a 2-acyl-sn-glycero-3-phosphocholine + H(+). The catalysed reaction is 1,2-dihexadecanoyl-sn-glycero-3-phosphocholine + H2O = 1-hexadecanoyl-sn-glycero-3-phosphocholine + hexadecanoate + H(+). The enzyme catalyses 1,2-dihexadecanoyl-sn-glycero-3-phosphocholine + H2O = 2-hexadecanoyl-sn-glycero-3-phosphocholine + hexadecanoate + H(+). It carries out the reaction 1-hexadecanoyl-2-(9Z-octadecenoyl)-sn-glycero-3-phosphocholine + H2O = 2-(9Z-octadecenoyl)-sn-glycero-3-phosphocholine + hexadecanoate + H(+). It catalyses the reaction 1-hexadecanoyl-2-(9Z-octadecenoyl)-sn-glycero-3-phosphocholine + H2O = 1-hexadecanoyl-sn-glycero-3-phosphocholine + (9Z)-octadecenoate + H(+). The catalysed reaction is 1-hexadecanoyl-2-(5Z,8Z,11Z,14Z-eicosatetraenoyl)-sn-glycero-3-phosphocholine + H2O = 2-(5Z,8Z,11Z,14Z)-eicosatetraenoyl-sn-glycero-3-phosphocholine + hexadecanoate + H(+). The enzyme catalyses 1-hexadecanoyl-2-(9Z,12Z-octadecadienoyl)-sn-glycero-3-phosphoethanolamine + H2O = 1-hexadecanoyl-sn-glycero-3-phosphoethanolamine + (9Z,12Z)-octadecadienoate + H(+). It carries out the reaction 1-hexadecanoyl-2-(9Z,12Z-octadecadienoyl)-sn-glycero-3-phosphoethanolamine + H2O = 2-(9Z,12Z)-octadecadienoyl-sn-glycero-3-phosphoethanolamine + hexadecanoate + H(+). It catalyses the reaction 1-hexadecanoyl-2-(5Z,8Z,11Z,14Z-eicosatetraenoyl)-sn-glycero-3-phosphoethanolamine + H2O = 1-hexadecanoyl-sn-glycero-3-phosphoethanolamine + (5Z,8Z,11Z,14Z)-eicosatetraenoate + H(+). The catalysed reaction is 1-hexadecanoyl-2-(5Z,8Z,11Z,14Z-eicosatetraenoyl)-sn-glycero-3-phosphoethanolamine + H2O = 2-(5Z,8Z,11Z,14Z)-eicosatetraenoyl-sn-glycero-3-phosphoethanolamine + hexadecanoate + H(+). The enzyme catalyses 1,2-di-(9Z-octadecenoyl)-sn-glycero-3-phosphoethanolamine + 1,2-dihexadecanoyl-sn-glycero-3-phosphocholine = N-hexadecanoyl-1,2-di-(9Z-octadecenoyl)-sn-glycero-3-phosphoethanolamine + 2-hexadecanoyl-sn-glycero-3-phosphocholine + H(+). It carries out the reaction 1,2-di-(9Z-octadecenoyl)-sn-glycero-3-phosphoethanolamine + 1,2-dihexadecanoyl-sn-glycero-3-phosphocholine = N-hexadecanoyl-1,2-di-(9Z-octadecenoyl)-sn-glycero-3-phosphoethanolamine + 1-hexadecanoyl-sn-glycero-3-phosphocholine + H(+). It catalyses the reaction 1-hexanoyl-2-acyl-sn-glycero-3-phosphocholine + H2O = 1-hexanoyl-sn-glycero-3-phosphocholine + a fatty acid + H(+). The catalysed reaction is 1,2-diheptadecanoyl-sn-glycero-3-phosphoethanolamine + 1-(9Z-octadecenoyl)-2-hexadecanoyl-sn-glycero-3-phosphocholine = 1,2-diheptadecanoyl-sn-glycero-3-phospho-N-hexadecanoyl-ethanolamine + 1-(9Z-octadecenoyl)-sn-glycero-3-phosphocholine + H(+). The enzyme catalyses 1,2-diheptadecanoyl-sn-glycero-3-phosphoethanolamine + 1-(9Z-octadecenoyl)-2-hexadecanoyl-sn-glycero-3-phosphocholine = 1,2-diheptadecanoyl-sn-glycero-3-phospho-N-(9Z-octadecenoyl)-ethanolamine + 2-hexadecanoyl-sn-glycero-3-phosphocholine + H(+). It carries out the reaction 1,2-dihexanoyl-sn-glycero-3-phosphocholine + 1,2-diheptanoyl-sn-glycero-3-phosphocholine = 1-heptanoyl-2-hexanoyl-sn-glycero-3-phosphocholine + 1-hexanoyl-2-heptanoyl-sn-glycero-3-phosphocholine. It catalyses the reaction 1,2-diheptanoyl-sn-glycero-3-phosphocholine + 1,2-dihexadecanoyl-sn-glycero-3-phosphocholine = 1-hexadecanoyl-2-heptanoyl-sn-glycero-3-phosphocholine + 1-heptanoyl-2-hexadecanoyl-sn-glycero-3-phosphocholine. The catalysed reaction is 1,2-dihexanoyl-sn-glycero-3-phosphoethanolamine + 1,2-diheptanoyl-sn-glycero-3-phosphocholine = 1-heptanoyl-2-hexanoyl-sn-glycero-3-phosphoethanolamine + 1-hexanoyl-2-heptanoyl-sn-glycero-3-phosphocholine. The enzyme catalyses 1-hexanoyl-2-acyl-sn-glycero-3-phosphocholine + H2O = hexanoate + a 2-acyl-sn-glycero-3-phosphocholine + H(+). It carries out the reaction 1,2-dihexanoyl-sn-glycero-3-phosphoethanolamine + 2-heptanoyl-sn-glycero-3-phosphocholine = hexanoyl-sn-glycero-3-phosphoethanolamine + 1-hexanoyl-2-heptanoyl-sn-glycero-3-phosphocholine. In terms of biological role, exhibits both phospholipase A1/2 and acyltransferase activities. Shows phospholipase A1 (PLA1) and A2 (PLA2) activity, catalyzing the calcium-independent release of fatty acids from the sn-1 or sn-2 position of glycerophospholipids. For most substrates, PLA1 activity is much higher than PLA2 activity. Shows O-acyltransferase activity, catalyzing the transfer of a fatty acyl group from glycerophospholipid to the hydroxyl group of lysophospholipid. Shows N-acyltransferase activity, catalyzing the calcium-independent transfer of a fatty acyl group at the sn-1 position of phosphatidylcholine (PC) and other glycerophospholipids to the primary amine of phosphatidylethanolamine (PE), forming N-acylphosphatidylethanolamine (NAPE), which serves as precursor for N-acylethanolamines (NAEs). Catalyzes N-acylation of PE using both sn-1 and sn-2 palmitoyl groups of PC as acyl donor. Exhibits high phospholipase A1/2 activity and low N-acyltransferase activity. This chain is Phospholipase A and acyltransferase 2, found in Homo sapiens (Human).